The chain runs to 603 residues: Threonine--tRNA ligase (603 aa).

Residues 209 to 500 (DHRKLGNEMK…LIEHCAGELP (292 aa)) form a catalytic region. Residues cysteine 301, histidine 352, and histidine 477 each contribute to the Zn(2+) site.

It belongs to the class-II aminoacyl-tRNA synthetase family. Homodimer. Zn(2+) serves as cofactor.

The protein localises to the cytoplasm. It carries out the reaction tRNA(Thr) + L-threonine + ATP = L-threonyl-tRNA(Thr) + AMP + diphosphate + H(+). Catalyzes the attachment of threonine to tRNA(Thr) in a two-step reaction: L-threonine is first activated by ATP to form Thr-AMP and then transferred to the acceptor end of tRNA(Thr). Also edits incorrectly charged L-seryl-tRNA(Thr). The polypeptide is Threonine--tRNA ligase (Campylobacter lari (strain RM2100 / D67 / ATCC BAA-1060)).